The sequence spans 241 residues: Tubulin-like protein alpha-4B (241 aa).

Residues 1-10 show a composition bias toward basic and acidic residues; the sequence is MRHQQTERQD. The disordered stretch occupies residues 1-20; it reads MRHQQTERQDPSQPLSRQHG. Aspartate 10 is a GTP binding site. Aspartate 10 provides a ligand contact to Mg(2+). Residues 11–20 show a composition bias toward polar residues; that stretch reads PSQPLSRQHG. GTP is bound by residues serine 79, glycine 83, threonine 84, threonine 118, asparagine 145, and asparagine 167. Glutamate 193 is a catalytic residue.

This sequence belongs to the tubulin family. Mg(2+) is required as a cofactor. In terms of processing, some glutamate residues at the C-terminus are polyglutamylated, resulting in polyglutamate chains on the gamma-carboxyl group. Polyglutamylation plays a key role in microtubule severing by spastin (SPAST). SPAST preferentially recognizes and acts on microtubules decorated with short polyglutamate tails: severing activity by SPAST increases as the number of glutamates per tubulin rises from one to eight, but decreases beyond this glutamylation threshold. Glutamylation is also involved in cilia motility. Post-translationally, some glutamate residues at the C-terminus are monoglycylated but not polyglycylated due to the absence of functional TTLL10 in human. Monoglycylation is mainly limited to tubulin incorporated into cilia and flagella axonemes, which is required for their stability and maintenance. Flagella glycylation controls sperm motility. Both polyglutamylation and monoglycylation can coexist on the same protein on adjacent residues, and lowering glycylation levels increases polyglutamylation, and reciprocally.

The protein resides in the cytoplasm. The protein localises to the cytoskeleton. The enzyme catalyses GTP + H2O = GDP + phosphate + H(+). Functionally, tubulin is the major constituent of microtubules, a cylinder consisting of laterally associated linear protofilaments composed ofalpha- and beta-tubulin heterodimers. The chain is Tubulin-like protein alpha-4B (TUBA4B) from Homo sapiens (Human).